A 325-amino-acid chain; its full sequence is Acetyl-coenzyme A carboxylase carboxyl transferase subunit beta (325 aa).

The region spanning 24–293 is the CoA carboxyltransferase N-terminal domain; the sequence is LWIKCPDSGH…AEIEVVTPEP (270 aa).

The protein belongs to the AccD/PCCB family. As to quaternary structure, acetyl-CoA carboxylase is a heterohexamer composed of biotin carboxyl carrier protein (AccB), biotin carboxylase (AccC) and two subunits each of ACCase subunit alpha (AccA) and ACCase subunit beta (AccD).

It is found in the cytoplasm. The enzyme catalyses N(6)-carboxybiotinyl-L-lysyl-[protein] + acetyl-CoA = N(6)-biotinyl-L-lysyl-[protein] + malonyl-CoA. The protein operates within lipid metabolism; malonyl-CoA biosynthesis; malonyl-CoA from acetyl-CoA: step 1/1. Component of the acetyl coenzyme A carboxylase (ACC) complex. Biotin carboxylase (BC) catalyzes the carboxylation of biotin on its carrier protein (BCCP) and then the CO(2) group is transferred by the transcarboxylase to acetyl-CoA to form malonyl-CoA. This chain is Acetyl-coenzyme A carboxylase carboxyl transferase subunit beta, found in Rhodopseudomonas palustris (strain BisA53).